Reading from the N-terminus, the 461-residue chain is Cysteine--tRNA ligase (461 aa).

Position 28 (Cys28) interacts with Zn(2+). The short motif at 30 to 40 is the 'HIGH' region element; that stretch reads ITVYDLCHIGH. Cys209, His234, and Glu238 together coordinate Zn(2+). Positions 266-270 match the 'KMSKS' region motif; it reads KMSKS. Residue Lys269 coordinates ATP.

The protein belongs to the class-I aminoacyl-tRNA synthetase family. In terms of assembly, monomer. It depends on Zn(2+) as a cofactor.

It is found in the cytoplasm. The enzyme catalyses tRNA(Cys) + L-cysteine + ATP = L-cysteinyl-tRNA(Cys) + AMP + diphosphate. The chain is Cysteine--tRNA ligase from Escherichia coli O17:K52:H18 (strain UMN026 / ExPEC).